Here is a 1082-residue protein sequence, read N- to C-terminus: DNA-directed RNA polymerase subunit beta (1082 aa).

This sequence belongs to the RNA polymerase beta chain family. As to quaternary structure, in plastids the minimal PEP RNA polymerase catalytic core is composed of four subunits: alpha, beta, beta', and beta''. When a (nuclear-encoded) sigma factor is associated with the core the holoenzyme is formed, which can initiate transcription.

Its subcellular location is the plastid. The protein localises to the chloroplast. The catalysed reaction is RNA(n) + a ribonucleoside 5'-triphosphate = RNA(n+1) + diphosphate. Its function is as follows. DNA-dependent RNA polymerase catalyzes the transcription of DNA into RNA using the four ribonucleoside triphosphates as substrates. This Euglena gracilis protein is DNA-directed RNA polymerase subunit beta.